Here is a 541-residue protein sequence, read N- to C-terminus: Chaperonin GroEL 2 (541 aa).

ATP-binding positions include 29-32 (TLGP), 86-90 (DGTTT), Gly-413, 476-478 (NAA), and Asp-492.

The protein belongs to the chaperonin (HSP60) family. Forms a cylinder of 14 subunits composed of two heptameric rings stacked back-to-back. Interacts with the co-chaperonin GroES.

Its subcellular location is the secreted. It localises to the capsule. It is found in the cell surface. The protein resides in the cell wall. It catalyses the reaction ATP + H2O + a folded polypeptide = ADP + phosphate + an unfolded polypeptide.. Its function is as follows. Together with its co-chaperonin GroES, plays an essential role in assisting protein folding. The GroEL-GroES system forms a nano-cage that allows encapsulation of the non-native substrate proteins and provides a physical environment optimized to promote and accelerate protein folding. The protein is Chaperonin GroEL 2 of Mycobacterium ulcerans (strain Agy99).